The following is a 126-amino-acid chain: Small ribosomal subunit protein uS12 (126 aa).

Residues 1-23 form a disordered region; the sequence is MPTISQLVRKGRKTVASKSTAPA. Aspartate 89 is subject to 3-methylthioaspartic acid.

The protein belongs to the universal ribosomal protein uS12 family. Part of the 30S ribosomal subunit. Contacts proteins S8 and S17. May interact with IF1 in the 30S initiation complex.

Functionally, with S4 and S5 plays an important role in translational accuracy. In terms of biological role, interacts with and stabilizes bases of the 16S rRNA that are involved in tRNA selection in the A site and with the mRNA backbone. Located at the interface of the 30S and 50S subunits, it traverses the body of the 30S subunit contacting proteins on the other side and probably holding the rRNA structure together. The combined cluster of proteins S8, S12 and S17 appears to hold together the shoulder and platform of the 30S subunit. This Clostridium perfringens (strain ATCC 13124 / DSM 756 / JCM 1290 / NCIMB 6125 / NCTC 8237 / Type A) protein is Small ribosomal subunit protein uS12.